We begin with the raw amino-acid sequence, 983 residues long: Bifunctional glutamine synthetase adenylyltransferase/adenylyl-removing enzyme (983 aa).

The adenylyl removase stretch occupies residues 1-490 (MDRKSSVTID…AHGQVFYSPV (490 aa)). The segment at 496–983 (RIPTQDLRMS…RVVDAVFWNQ (488 aa)) is adenylyl transferase.

Belongs to the GlnE family. Requires Mg(2+) as cofactor.

The catalysed reaction is [glutamine synthetase]-O(4)-(5'-adenylyl)-L-tyrosine + phosphate = [glutamine synthetase]-L-tyrosine + ADP. It catalyses the reaction [glutamine synthetase]-L-tyrosine + ATP = [glutamine synthetase]-O(4)-(5'-adenylyl)-L-tyrosine + diphosphate. In terms of biological role, involved in the regulation of glutamine synthetase GlnA, a key enzyme in the process to assimilate ammonia. When cellular nitrogen levels are high, the C-terminal adenylyl transferase (AT) inactivates GlnA by covalent transfer of an adenylyl group from ATP to specific tyrosine residue of GlnA, thus reducing its activity. Conversely, when nitrogen levels are low, the N-terminal adenylyl removase (AR) activates GlnA by removing the adenylyl group by phosphorolysis, increasing its activity. The regulatory region of GlnE binds the signal transduction protein PII (GlnB) which indicates the nitrogen status of the cell. This chain is Bifunctional glutamine synthetase adenylyltransferase/adenylyl-removing enzyme, found in Cutibacterium acnes (strain DSM 16379 / KPA171202) (Propionibacterium acnes).